A 789-amino-acid chain; its full sequence is Mediator of RNA polymerase II transcription subunit 15 (789 aa).

Residues 9–73 (DWRSAAFRQK…IHFRDIHNKK (65 aa)) form an interaction with SREBF1 region. Disordered stretches follow at residues 88–140 (LTGG…APHG) and 257–326 (QQQA…PLVS). Low complexity predominate over residues 89–102 (TGGPTPGAAGIGMP). Positions 108–118 (QSLGGMGGLGA) are enriched in gly residues. 3 stretches are compositionally biased toward low complexity: residues 257–274 (QQQALQAQPPMQQPSMQQ), 282–291 (ALPQQLSQLH), and 302–326 (AQQSPIAQNQPPQIPPQSQSQPLVS). Arg-347 carries the post-translational modification Asymmetric dimethylarginine. Residues 404 to 531 (RFPPTSTMSA…PAGSSQAEEQ (128 aa)) are disordered. Over residues 407-426 (PTSTMSAGPSSSISLGGQPT) the composition is skewed to polar residues. The segment covering 427 to 450 (TQVSQSSLTMLSSPSPGQQVQTPQ) has biased composition (low complexity). The span at 451–463 (SMPPPPQPSPQPG) shows a compositional bias: pro residues. The segment covering 464-483 (SQPNSNVSSGPAPSPSSFLP) has biased composition (low complexity). Polar residues-rich tracts occupy residues 494–504 (VTARTPQNFSV) and 512–530 (TPVNPSSVMSPAGSSQAEE). The Nuclear localization signal signature appears at 548-565 (RRMINKIDKNEDRKKDLS). A Phosphothreonine modification is found at Thr-604.

The protein belongs to the Mediator complex subunit 15 family. Component of the Mediator complex, which is composed of MED1, MED4, MED6, MED7, MED8, MED9, MED10, MED11, MED12, MED13, MED13L, MED14, MED15, MED16, MED17, MED18, MED19, MED20, MED21, MED22, MED23, MED24, MED25, MED26, MED27, MED29, MED30, MED31, CCNC, CDK8 and CDC2L6/CDK11. The MED12, MED13, CCNC and CDK8 subunits form a distinct module termed the CDK8 module. Mediator containing the CDK8 module is less active than Mediator lacking this module in supporting transcriptional activation. Individual preparations of the Mediator complex lacking one or more distinct subunits have been variously termed ARC, CRSP, DRIP, PC2, SMCC and TRAP. Interacts with SMAD2, SMAD3, SREBF1 and SREBF2. Interacts with WWTR1. Interacts with TRIM11. In terms of processing, ubiquitinated by TRIM11, leading to proteasomal degradation.

The protein localises to the cytoplasm. It is found in the nucleus. Its function is as follows. Component of the Mediator complex, a coactivator involved in the regulated transcription of nearly all RNA polymerase II-dependent genes. Mediator functions as a bridge to convey information from gene-specific regulatory proteins to the basal RNA polymerase II transcription machinery. Mediator is recruited to promoters by direct interactions with regulatory proteins and serves as a scaffold for the assembly of a functional preinitiation complex with RNA polymerase II and the general transcription factors. Required for cholesterol-dependent gene regulation. Positively regulates the Nodal signaling pathway. The sequence is that of Mediator of RNA polymerase II transcription subunit 15 (Med15) from Mus musculus (Mouse).